A 168-amino-acid chain; its full sequence is Mesencephalic astrocyte-derived neurotrophic factor homolog (168 aa).

The N-terminal stretch at 1-17 (MSRLVLLISLVIVVASA) is a signal peptide. 4 disulfide bridges follow: Cys-22-Cys-109, Cys-25-Cys-97, Cys-55-Cys-66, and Cys-143-Cys-146.

Belongs to the ARMET family. In terms of tissue distribution, expressed in the intestine, spermatheca and nervous system. Expressed in the hypoderm. Expressed in structures of the excretory system. Not expressed in the male gonad.

Its subcellular location is the secreted. It localises to the endoplasmic reticulum lumen. Inhibits endoplasmic reticulum (ER) stress response. Retained in the ER under normal conditions and is up-regulated and secreted by the ER in response to ER stress and hypoxia. Following secretion by the ER, directly binds to 3-O-sulfogalactosylceramide, a lipid sulfatide in the outer cell membrane of target cells. Sulfatide binding promotes its cellular uptake by endocytosis, and is required for its role in alleviating ER stress under ER stress conditions. Has a neuroprotective role, ensuring survival of dopaminergic neurons during normal growth. The sequence is that of Mesencephalic astrocyte-derived neurotrophic factor homolog from Caenorhabditis elegans.